The sequence spans 600 residues: Elongation factor 4 (600 aa).

The tr-type G domain occupies 5 to 187; the sequence is KYIRNFSIIA…AIINKLPSPK (183 aa). GTP is bound by residues 17 to 22 and 134 to 137; these read DHGKST and NKID.

This sequence belongs to the TRAFAC class translation factor GTPase superfamily. Classic translation factor GTPase family. LepA subfamily.

The protein resides in the cell inner membrane. The catalysed reaction is GTP + H2O = GDP + phosphate + H(+). Functionally, required for accurate and efficient protein synthesis under certain stress conditions. May act as a fidelity factor of the translation reaction, by catalyzing a one-codon backward translocation of tRNAs on improperly translocated ribosomes. Back-translocation proceeds from a post-translocation (POST) complex to a pre-translocation (PRE) complex, thus giving elongation factor G a second chance to translocate the tRNAs correctly. Binds to ribosomes in a GTP-dependent manner. The protein is Elongation factor 4 of Rickettsia typhi (strain ATCC VR-144 / Wilmington).